Reading from the N-terminus, the 317-residue chain is Aspartate carbamoyltransferase catalytic subunit (317 aa).

Carbamoyl phosphate is bound by residues R65 and T66. An L-aspartate-binding site is contributed by K93. 3 residues coordinate carbamoyl phosphate: R115, H145, and Q148. The L-aspartate site is built by R178 and R233. Carbamoyl phosphate-binding residues include G274 and P275.

Belongs to the aspartate/ornithine carbamoyltransferase superfamily. ATCase family. In terms of assembly, heterododecamer (2C3:3R2) of six catalytic PyrB chains organized as two trimers (C3), and six regulatory PyrI chains organized as three dimers (R2).

The catalysed reaction is carbamoyl phosphate + L-aspartate = N-carbamoyl-L-aspartate + phosphate + H(+). The protein operates within pyrimidine metabolism; UMP biosynthesis via de novo pathway; (S)-dihydroorotate from bicarbonate: step 2/3. Its function is as follows. Catalyzes the condensation of carbamoyl phosphate and aspartate to form carbamoyl aspartate and inorganic phosphate, the committed step in the de novo pyrimidine nucleotide biosynthesis pathway. The polypeptide is Aspartate carbamoyltransferase catalytic subunit (Bordetella bronchiseptica (strain ATCC BAA-588 / NCTC 13252 / RB50) (Alcaligenes bronchisepticus)).